We begin with the raw amino-acid sequence, 208 residues long: Protein-L-isoaspartate O-methyltransferase (208 aa).

S59 is an active-site residue.

It belongs to the methyltransferase superfamily. L-isoaspartyl/D-aspartyl protein methyltransferase family.

It localises to the cytoplasm. It carries out the reaction [protein]-L-isoaspartate + S-adenosyl-L-methionine = [protein]-L-isoaspartate alpha-methyl ester + S-adenosyl-L-homocysteine. In terms of biological role, catalyzes the methyl esterification of L-isoaspartyl residues in peptides and proteins that result from spontaneous decomposition of normal L-aspartyl and L-asparaginyl residues. It plays a role in the repair and/or degradation of damaged proteins. The protein is Protein-L-isoaspartate O-methyltransferase of Aliivibrio fischeri (strain MJ11) (Vibrio fischeri).